A 285-amino-acid chain; its full sequence is Elongation factor Ts (285 aa).

Residues 82-85 form an involved in Mg(2+) ion dislocation from EF-Tu region; it reads TDFV.

Belongs to the EF-Ts family.

Its subcellular location is the cytoplasm. In terms of biological role, associates with the EF-Tu.GDP complex and induces the exchange of GDP to GTP. It remains bound to the aminoacyl-tRNA.EF-Tu.GTP complex up to the GTP hydrolysis stage on the ribosome. This chain is Elongation factor Ts, found in Yersinia pseudotuberculosis serotype O:1b (strain IP 31758).